We begin with the raw amino-acid sequence, 227 residues long: Uracil-DNA glycosylase (227 aa).

The Proton acceptor role is filled by D65.

The protein belongs to the uracil-DNA glycosylase (UDG) superfamily. UNG family.

It is found in the cytoplasm. It carries out the reaction Hydrolyzes single-stranded DNA or mismatched double-stranded DNA and polynucleotides, releasing free uracil.. Functionally, excises uracil residues from the DNA which can arise as a result of misincorporation of dUMP residues by DNA polymerase or due to deamination of cytosine. The sequence is that of Uracil-DNA glycosylase from Lactobacillus delbrueckii subsp. bulgaricus (strain ATCC 11842 / DSM 20081 / BCRC 10696 / JCM 1002 / NBRC 13953 / NCIMB 11778 / NCTC 12712 / WDCM 00102 / Lb 14).